The primary structure comprises 93 residues: MLKVNEYFDGAVKSIGFQSETLPATVGVMAPGAYTFGTDQKETMTVVSGALTVKLPGQDGWQRFAAAEHFEVEANQSFELKVEVATAYLCTYG.

The protein belongs to the nucleoside phosphorylase PpnP family.

The catalysed reaction is a purine D-ribonucleoside + phosphate = a purine nucleobase + alpha-D-ribose 1-phosphate. It catalyses the reaction adenosine + phosphate = alpha-D-ribose 1-phosphate + adenine. It carries out the reaction cytidine + phosphate = cytosine + alpha-D-ribose 1-phosphate. The enzyme catalyses guanosine + phosphate = alpha-D-ribose 1-phosphate + guanine. The catalysed reaction is inosine + phosphate = alpha-D-ribose 1-phosphate + hypoxanthine. It catalyses the reaction thymidine + phosphate = 2-deoxy-alpha-D-ribose 1-phosphate + thymine. It carries out the reaction uridine + phosphate = alpha-D-ribose 1-phosphate + uracil. The enzyme catalyses xanthosine + phosphate = alpha-D-ribose 1-phosphate + xanthine. Functionally, catalyzes the phosphorolysis of diverse nucleosides, yielding D-ribose 1-phosphate and the respective free bases. Can use uridine, adenosine, guanosine, cytidine, thymidine, inosine and xanthosine as substrates. Also catalyzes the reverse reactions. The protein is Pyrimidine/purine nucleoside phosphorylase of Magnetococcus marinus (strain ATCC BAA-1437 / JCM 17883 / MC-1).